Reading from the N-terminus, the 303-residue chain is UDP-3-O-acyl-N-acetylglucosamine deacetylase (303 aa).

The Zn(2+) site is built by histidine 78, histidine 237, and aspartate 241. Histidine 264 functions as the Proton donor in the catalytic mechanism.

This sequence belongs to the LpxC family. Zn(2+) is required as a cofactor.

It carries out the reaction a UDP-3-O-[(3R)-3-hydroxyacyl]-N-acetyl-alpha-D-glucosamine + H2O = a UDP-3-O-[(3R)-3-hydroxyacyl]-alpha-D-glucosamine + acetate. It functions in the pathway glycolipid biosynthesis; lipid IV(A) biosynthesis; lipid IV(A) from (3R)-3-hydroxytetradecanoyl-[acyl-carrier-protein] and UDP-N-acetyl-alpha-D-glucosamine: step 2/6. Functionally, catalyzes the hydrolysis of UDP-3-O-myristoyl-N-acetylglucosamine to form UDP-3-O-myristoylglucosamine and acetate, the committed step in lipid A biosynthesis. The polypeptide is UDP-3-O-acyl-N-acetylglucosamine deacetylase (Pseudomonas entomophila (strain L48)).